Here is a 940-residue protein sequence, read N- to C-terminus: UvrABC system protein A (940 aa).

Residue 31–38 coordinates ATP; it reads GLSGSGKS. The C4-type zinc finger occupies 252–279; the sequence is CPQCGYSMQELEPRLFSFNNPAGACGTC. ABC transporter domains are found at residues 309–586 and 606–936; these read WDQK…PNSL and RDPK…RFLK. Residue 639–646 coordinates ATP; that stretch reads GVSGSGKS. A C4-type zinc finger spans residues 739–765; sequence CEACQGDGVIKVEMHFLPDVYVPCDVC.

The protein belongs to the ABC transporter superfamily. UvrA family. In terms of assembly, forms a heterotetramer with UvrB during the search for lesions.

It localises to the cytoplasm. Its function is as follows. The UvrABC repair system catalyzes the recognition and processing of DNA lesions. UvrA is an ATPase and a DNA-binding protein. A damage recognition complex composed of 2 UvrA and 2 UvrB subunits scans DNA for abnormalities. When the presence of a lesion has been verified by UvrB, the UvrA molecules dissociate. The protein is UvrABC system protein A of Vibrio parahaemolyticus serotype O3:K6 (strain RIMD 2210633).